We begin with the raw amino-acid sequence, 160 residues long: Protein P5 (160 aa).

The chain crosses the membrane as a helical span at residues 7-23 (FLATAAALGVAMFPTQI).

The protein resides in the virion membrane. The polypeptide is Protein P5 (V) (Pseudoalteromonas espejiana (Bacteriophage PM2)).